The primary structure comprises 151 residues: Ribosome maturation factor RimP (151 aa).

It belongs to the RimP family.

It localises to the cytoplasm. Functionally, required for maturation of 30S ribosomal subunits. The sequence is that of Ribosome maturation factor RimP from Shewanella oneidensis (strain ATCC 700550 / JCM 31522 / CIP 106686 / LMG 19005 / NCIMB 14063 / MR-1).